Here is a 353-residue protein sequence, read N- to C-terminus: ATP-dependent kinase YFH7 (353 aa).

Residue 31-39 (GSPGSGKST) participates in ATP binding.

This sequence belongs to the YFH7 family.

In terms of biological role, ATP-dependent kinase that could be involved in endoplasmic reticulum membrane assembly. This chain is ATP-dependent kinase YFH7 (YFH7), found in Saccharomyces cerevisiae (strain Lalvin EC1118 / Prise de mousse) (Baker's yeast).